A 118-amino-acid polypeptide reads, in one-letter code: UPF0102 protein Bcav_2532 (118 aa).

The protein belongs to the UPF0102 family.

The polypeptide is UPF0102 protein Bcav_2532 (Beutenbergia cavernae (strain ATCC BAA-8 / DSM 12333 / CCUG 43141 / JCM 11478 / NBRC 16432 / NCIMB 13614 / HKI 0122)).